A 321-amino-acid polypeptide reads, in one-letter code: Zinc finger protein 524 (321 aa).

2 stretches are compositionally biased toward polar residues: residues 1-14 and 39-48; these read MDNPSSDPLPSTLS and ATTSNRTLKS. 2 disordered regions span residues 1-80 and 86-105; these read MDNP…DLLL and VPYTVPEGSAADGPQGSGSK. The segment at residues 49 to 59 is a DNA-binding region (a.T hook); that stretch reads SLPRKRGRPPR. 4 C2H2-type zinc fingers span residues 109–131, 137–159, 165–187, and 193–216; these read HFCPVCLRAFPYLSDLERHSISH, HVCKDCGKTFKRSSHLRRHCNIH, FRCVLCPRRFREAGELAHHHRIH, and YQCPSCRVRFTEANTLRRHYKRKH. Positions 248–321 are disordered; the sequence is GVQEESPEGK…PGAIGHPPVD (74 aa). The segment covering 262-271 has biased composition (polar residues); it reads PISSTTSPLS. Gly residues predominate over residues 274 to 285; sequence TAGGSAGAGRGQ.

This sequence belongs to the krueppel C2H2-type zinc-finger protein family.

It is found in the nucleus. In terms of biological role, may be involved in transcriptional regulation. In Mus musculus (Mouse), this protein is Zinc finger protein 524 (Znf524).